Here is a 632-residue protein sequence, read N- to C-terminus: tRNA uridine 5-carboxymethylaminomethyl modification enzyme MnmG (632 aa).

FAD is bound by residues 13 to 18 (GGGHAG), Val-125, and Ser-180. 273-287 (GPRYCPSIEDKINRF) lines the NAD(+) pocket. Gln-370 lines the FAD pocket.

This sequence belongs to the MnmG family. As to quaternary structure, homodimer. Heterotetramer of two MnmE and two MnmG subunits. FAD is required as a cofactor.

It is found in the cytoplasm. NAD-binding protein involved in the addition of a carboxymethylaminomethyl (cmnm) group at the wobble position (U34) of certain tRNAs, forming tRNA-cmnm(5)s(2)U34. The chain is tRNA uridine 5-carboxymethylaminomethyl modification enzyme MnmG from Shewanella sediminis (strain HAW-EB3).